Reading from the N-terminus, the 253-residue chain is Triosephosphate isomerase (253 aa).

12–14 (NWK) is a substrate binding site. His-100 functions as the Electrophile in the catalytic mechanism. Glu-170 serves as the catalytic Proton acceptor. Substrate-binding positions include Gly-176, Ser-215, and 236–237 (GG).

This sequence belongs to the triosephosphate isomerase family. In terms of assembly, homodimer.

It localises to the cytoplasm. The catalysed reaction is D-glyceraldehyde 3-phosphate = dihydroxyacetone phosphate. It participates in carbohydrate biosynthesis; gluconeogenesis. It functions in the pathway carbohydrate degradation; glycolysis; D-glyceraldehyde 3-phosphate from glycerone phosphate: step 1/1. In terms of biological role, involved in the gluconeogenesis. Catalyzes stereospecifically the conversion of dihydroxyacetone phosphate (DHAP) to D-glyceraldehyde-3-phosphate (G3P). This Rhodopseudomonas palustris (strain BisA53) protein is Triosephosphate isomerase.